We begin with the raw amino-acid sequence, 483 residues long: Zinc metalloproteinase/disintegrin (483 aa).

Positions 1–20 (MIQVLLVTICLAVFPYQGSS) are cleaved as a signal peptide. A propeptide spanning residues 21-190 (IILESGNVND…KASQLYLTPE (170 aa)) is cleaved from the precursor. The region spanning 197-395 (RYIELAIVVD…RNPQCILNAP (199 aa)) is the Peptidase M12B domain. Glu-200 contributes to the Ca(2+) binding site. N-linked (GlcNAc...) asparagine glycosylation is present at Asn-263. Asp-284 is a binding site for Ca(2+). Asn-293 carries N-linked (GlcNAc...) asparagine glycosylation. 3 disulfide bridges follow: Cys-308–Cys-390, Cys-352–Cys-374, and Cys-354–Cys-357. Residue His-333 participates in Zn(2+) binding. The active site involves Glu-334. Residues His-337 and His-343 each coordinate Zn(2+). Residues Cys-390 and Asn-393 each coordinate Ca(2+). A propeptide spanning residues 396 to 413 (LRTDTVSTPVSGNEFLEA) is cleaved from the precursor. In terms of domain architecture, Disintegrin spans 403-483 (TPVSGNEFLE…SNDCPRWNDL (81 aa)). 6 cysteine pairs are disulfide-bonded: Cys-417–Cys-432, Cys-419–Cys-427, Cys-426–Cys-449, Cys-440–Cys-446, Cys-445–Cys-470, and Cys-458–Cys-477. The short motif at 462 to 464 (RGD) is the Cell attachment site element.

This sequence belongs to the venom metalloproteinase (M12B) family. P-II subfamily. P-IIa sub-subfamily. As to quaternary structure, monomeric (disintegrin). It depends on Zn(2+) as a cofactor. In terms of tissue distribution, expressed by the venom gland.

It is found in the secreted. Functionally, impairs hemostasis in the envenomed animal. In terms of biological role, inhibits platelet aggregation induced by ADP, thrombin, platelet-activating factor and collagen. Acts by inhibiting fibrinogen interaction with platelet receptors GPIIb/GPIIIa (ITGA2B/ITGB3). This Protobothrops flavoviridis (Habu) protein is Zinc metalloproteinase/disintegrin.